A 112-amino-acid polypeptide reads, in one-letter code: Gonad-inhibiting hormone (112 aa).

The N-terminal stretch at 1–31 (MVTRVGSGFSVQRVWLLLVIVVVLCGSVTQQ) is a signal peptide. Cystine bridges form between C41/C78, C58/C74, and C61/C87. A109 is modified (alanine amide).

Produced in the eyestalk X-organ sinus gland complex of male and female lobsters.

The protein resides in the secreted. Functionally, inhibits vitellogenesis in female animals. Plays a prominent role in the regulation of reproduction/molting processes. The sequence is that of Gonad-inhibiting hormone from Homarus americanus (American lobster).